We begin with the raw amino-acid sequence, 783 residues long: RNA exonuclease 5 (783 aa).

The 149-residue stretch at 230–378 folds into the Exonuclease domain; that stretch reads LFGLDCEMCL…EDARTTLELA (149 aa). 2 consecutive RRM domains span residues 503–577 and 598–677; these read STVY…RPVT and GTIY…RHLH.

This Bos taurus (Bovine) protein is RNA exonuclease 5 (REXO5).